Here is a 146-residue protein sequence, read N- to C-terminus: uncharacterized protein (146 aa).

Positions M1–S24 are cleaved as a signal peptide. N-linked (GlcNAc...) asparagine glycosylation is found at N99 and N106.

This is an uncharacterized protein from Saccharomyces cerevisiae (strain ATCC 204508 / S288c) (Baker's yeast).